The primary structure comprises 168 residues: Ribonuclease H (168 aa).

One can recognise an RNase H type-1 domain in the interval 10 to 151 (NNIPVKIYTD…ADKLATNGKI (142 aa)). Mg(2+)-binding residues include aspartate 19, glutamate 57, aspartate 79, and aspartate 143.

The protein belongs to the RNase H family. As to quaternary structure, monomer. It depends on Mg(2+) as a cofactor.

The protein localises to the cytoplasm. It carries out the reaction Endonucleolytic cleavage to 5'-phosphomonoester.. Functionally, endonuclease that specifically degrades the RNA of RNA-DNA hybrids. The protein is Ribonuclease H of Orientia tsutsugamushi (strain Boryong) (Rickettsia tsutsugamushi).